The primary structure comprises 265 residues: 5'-nucleotidase SurE (265 aa).

4 residues coordinate a divalent metal cation: aspartate 8, aspartate 9, serine 39, and asparagine 96.

This sequence belongs to the SurE nucleotidase family. A divalent metal cation is required as a cofactor.

Its subcellular location is the cytoplasm. It carries out the reaction a ribonucleoside 5'-phosphate + H2O = a ribonucleoside + phosphate. In terms of biological role, nucleotidase that shows phosphatase activity on nucleoside 5'-monophosphates. This Dehalococcoides mccartyi (strain ATCC BAA-2100 / JCM 16839 / KCTC 5957 / BAV1) protein is 5'-nucleotidase SurE.